Reading from the N-terminus, the 301-residue chain is Mitochondrial carnitine/acylcarnitine carrier protein (301 aa).

An N-acetylalanine modification is found at Ala-2. Residues 2-12 are Cytoplasmic-facing; it reads ADEPKPISPFK. Solcar repeat units lie at residues 8 to 99, 108 to 196, and 207 to 293; these read ISPF…GKKL, LSYP…LKNL, and LSVP…AMKF. A helical transmembrane segment spans residues 13 to 31; it reads NLLAGGFGGMCLVFVGHPL. Residues 32-73 lie on the Mitochondrial matrix side of the membrane; it reads DTVKVRLQTQPPSLSGQPPMYSGTLDCFRKTLMREGITGLYR. Residues 74 to 93 form a helical membrane-spanning segment; it reads GMAAPIIGVTPMFAVCFFGF. Topologically, residues 94–112 are cytoplasmic; that stretch reads GLGKKLQQKSPEDELSYPQ. A helical transmembrane segment spans residues 113 to 131; sequence LFTAGMLSGVFTTGIMTPG. The Mitochondrial matrix segment spans residues 132–170; it reads ERIKCLLQIQASSGENKYSGTLDCAKKLYQEFGIRGFYK. N6-acetyllysine occurs at positions 148 and 157. Lys-170 is modified (N6-acetyllysine; alternate). Lys-170 carries the N6-succinyllysine; alternate modification. A helical membrane pass occupies residues 171-190; sequence GTVLTLMRDVPASGMYFMTY. Topologically, residues 191–211 are cytoplasmic; the sequence is EWLKNLFTPEGKSVSDLSVPR. A helical membrane pass occupies residues 212–230; it reads ILVAGGFAGIFNWAVAIPP. At 231–267 the chain is on the mitochondrial matrix side; the sequence is DVLKSRFQTAPPGKYPNGFRDVLRELIREEGVTSLYK. The chain crosses the membrane as a helical span at residues 268-287; the sequence is GFNAVMIRAFPANAACFLGF. Residues 288 to 301 are Cytoplasmic-facing; it reads EIAMKFLNWIAPNL.

This sequence belongs to the mitochondrial carrier (TC 2.A.29) family. Widely expressed, with highest levels in the liver, intermediate levels in heart, testis and kidney and low levels in brain, including cortex, cerebellum, hippocampus and hypothalamus.

It localises to the mitochondrion inner membrane. The catalysed reaction is O-acetyl-(R)-carnitine(in) + (R)-carnitine(out) = O-acetyl-(R)-carnitine(out) + (R)-carnitine(in). It catalyses the reaction an O-acyl-(R)-carnitine(in) + (R)-carnitine(out) = an O-acyl-(R)-carnitine(out) + (R)-carnitine(in). It carries out the reaction O-propanoyl-(R)-carnitine(in) + (R)-carnitine(out) = O-propanoyl-(R)-carnitine(out) + (R)-carnitine(in). The enzyme catalyses O-hexadecanoyl-(R)-carnitine(in) + (R)-carnitine(out) = O-hexadecanoyl-(R)-carnitine(out) + (R)-carnitine(in). The catalysed reaction is O-octanoyl-(R)-carnitine(in) + (R)-carnitine(out) = O-octanoyl-(R)-carnitine(out) + (R)-carnitine(in). It catalyses the reaction (R)-carnitine(in) = (R)-carnitine(out). In terms of biological role, mediates the electroneutral exchange of acylcarnitines (O-acyl-(R)-carnitine or L-acylcarnitine) of different acyl chain lengths (ranging from O-acetyl-(R)-carnitine to long-chain O-acyl-(R)-carnitines) with free carnitine ((R)-carnitine or L-carnitine) across the mitochondrial inner membrane, via a ping-pong mechanism. Key player in the mitochondrial oxidation pathway, it translocates the fatty acids in the form of acylcarnitines into the mitochondrial matrix, where the carnitine palmitoyltransferase 2 (CPT-2) activates them to undergo fatty acid beta-oxidation. Catalyzes the unidirectional transport (uniport) of carnitine at lower rates than the antiport (exchange). In Mus musculus (Mouse), this protein is Mitochondrial carnitine/acylcarnitine carrier protein.